We begin with the raw amino-acid sequence, 240 residues long: SURF1-like protein (240 aa).

2 helical membrane passes run 7–23 (VFIT…WQLS) and 201–219 (YALT…YVIY).

It belongs to the SURF1 family.

Its subcellular location is the cell membrane. In Rickettsia conorii (strain ATCC VR-613 / Malish 7), this protein is SURF1-like protein.